The primary structure comprises 327 residues: MTLEALSSNGLLNFLLSETLSPTPFKSLVDLEPLPENDVIISKNTISEISNQEPPPQRQPPATNRGKKRRRRKPRVCKNEEEAENQRMTHIAVERNRRRQMNQHLSVLRSLMPQPFAHKGDQASIVGGAIDFIKELEHKLLSLEAQKHHNAKLNQSVTSSTSQDSNGEQENPHQPSSLSLSQFFLHSYDPSQENRNGSTSSVKTPMEDLEVTLIETHANIRILSRRRGFRWSTLATTKPPQLSKLVASLQSLSLSILHLSVTTLDNYAIYSISAKVEESCQLSSVDDIAGAVHHMLSIIEEEPFCCSSMSELPFDFSLNHSNVTHSL.

2 disordered regions span residues 46–88 (ISEI…NQRM) and 151–176 (AKLNQSVTSSTSQDSNGEQENPHQPS). The span at 65 to 76 (RGKKRRRRKPRV) shows a compositional bias: basic residues. Positions 77 to 88 (CKNEEEAENQRM) are enriched in basic and acidic residues. The bHLH domain occupies 85–136 (NQRMTHIAVERNRRRQMNQHLSVLRSLMPQPFAHKGDQASIVGGAIDFIKEL). Residues 152–169 (KLNQSVTSSTSQDSNGEQ) are compositionally biased toward polar residues.

In terms of assembly, homodimer. Interacts with FAMA. In terms of tissue distribution, expressed in leaves, stems, and flowers.

It is found in the nucleus. Functionally, transcription factor. May be involved in the differentiation of stomatal guard cells. This is Transcription factor bHLH71 (BHLH71) from Arabidopsis thaliana (Mouse-ear cress).